Here is a 699-residue protein sequence, read N- to C-terminus: Zinc finger protein 782 (699 aa).

The 72-residue stretch at 8–79 (VSFQDVTVEF…EKEKGFLSRN (72 aa)) folds into the KRAB domain. Residues 75 to 95 (FLSRNSPEDSQPDEISEKSPE) form a disordered region. Residues 279 to 307 (CFCRITHKTLTGGKSFSQKSHIREHHRVH) form a C2H2-type 1; degenerate zinc finger. Residues 316-332 (GKSFNRNSTLPVHQRTH) form a C2H2-type 2; degenerate zinc finger. The segment at 337 to 360 (YSDYHPCTETFSYQSTFSVHQKVH) adopts a C2H2-type 3; degenerate zinc-finger fold. The C2H2-type 4; degenerate zinc finger occupies 366–388 (YEYNECGKSCSMNSHLIWPQKSH). 11 consecutive C2H2-type zinc fingers follow at residues 394 to 416 (YECPECGKAFSEKSRLRKHQRTH), 422 to 444 (YKCDGCDKAFSAKSGLRIHQRTH), 450 to 472 (FECHECGKSFNYKSILIVHQRTH), 478 to 500 (FECNECGKSFSHMSGLRNHRRTH), 506 to 528 (YKCDECGKAFKLKSGLRKHHRTH), 534 to 556 (YKCNQCGKAFGQKSQLRGHHRIH), 562 to 584 (YKCNHCGEAFSQKSNLRVHHRTH), 590 to 612 (YQCEECGKTFRQKSNLRGHQRTH), 618 to 640 (YECNECGKAFSEKSVLRKHQRTH), 646 to 668 (YNCNQCGEAFSQKSNLRVHQRTH), and 674 to 696 (YKCDKCGRTFSQKSSLREHQKAH).

The protein belongs to the krueppel C2H2-type zinc-finger protein family.

The protein resides in the nucleus. Functionally, may be involved in transcriptional regulation. The sequence is that of Zinc finger protein 782 (ZNF782) from Homo sapiens (Human).